The sequence spans 340 residues: Cytoskeleton protein RodZ (340 aa).

Over 1–111 (MNTEATQEKS…LGKQRKKRDG (111 aa)) the chain is Cytoplasmic. One can recognise an HTH cro/C1-type domain in the interval 19 to 79 (LRTAREQMGL…RLVHVPEEEL (61 aa)). Residues 30–49 (QQNVAERLCLKLSTIRDIEE) constitute a DNA-binding region (H-T-H motif). The helical; Signal-anchor for type II membrane protein transmembrane segment at 112–132 (WLMIFTWLVLFVVLGLTGAWW) threads the bilayer. At 133 to 340 (WQNHKAAQDD…QVARLTVGAP (208 aa)) the chain is on the periplasmic side. The disordered stretch occupies residues 162–252 (ALSDDNANGG…AAPLPTGSAA (91 aa)). The segment covering 183 to 201 (ATANNAPSSVTATSDNGTP) has biased composition (polar residues). Over residues 202-233 (AATAQSSQVTASNAAPAANAVNDNTPPVAVAP) the composition is skewed to low complexity.

Belongs to the RodZ family.

It localises to the cell inner membrane. In terms of biological role, cytoskeletal protein that is involved in cell-shape control through regulation of the length of the long axis. The sequence is that of Cytoskeleton protein RodZ from Erwinia tasmaniensis (strain DSM 17950 / CFBP 7177 / CIP 109463 / NCPPB 4357 / Et1/99).